A 644-amino-acid polypeptide reads, in one-letter code: Acetyl-coenzyme A synthetase 2 (644 aa).

CoA-binding positions include 189–192 (RGGK), Thr-307, and Asn-331. ATP is bound by residues 383 to 385 (GEP), 407 to 412 (DTWWQT), Asp-496, and Arg-511. Ser-519 serves as a coordination point for CoA. Residue Arg-522 participates in ATP binding. Residues Val-533, His-535, and Val-538 each contribute to the Mg(2+) site. Lys-605 is modified (N6-acetyllysine).

Belongs to the ATP-dependent AMP-binding enzyme family. It depends on Mg(2+) as a cofactor. Acetylated. Deacetylation by the SIR2-homolog deacetylase activates the enzyme.

The catalysed reaction is acetate + ATP + CoA = acetyl-CoA + AMP + diphosphate. Functionally, catalyzes the conversion of acetate into acetyl-CoA (AcCoA), an essential intermediate at the junction of anabolic and catabolic pathways. AcsA undergoes a two-step reaction. In the first half reaction, AcsA combines acetate with ATP to form acetyl-adenylate (AcAMP) intermediate. In the second half reaction, it can then transfer the acetyl group from AcAMP to the sulfhydryl group of CoA, forming the product AcCoA. This Pseudomonas putida (strain ATCC 47054 / DSM 6125 / CFBP 8728 / NCIMB 11950 / KT2440) protein is Acetyl-coenzyme A synthetase 2.